The sequence spans 198 residues: Pyridoxine/pyridoxamine 5'-phosphate oxidase 2 (198 aa).

FMN-binding positions include R42, N59–T60, K66, and R121–S122.

It belongs to the pyridoxamine 5'-phosphate oxidase family. Homodimer. The cofactor is FMN.

It carries out the reaction pyridoxamine 5'-phosphate + O2 + H2O = pyridoxal 5'-phosphate + H2O2 + NH4(+). The catalysed reaction is pyridoxine 5'-phosphate + O2 = pyridoxal 5'-phosphate + H2O2. Its pathway is cofactor metabolism; pyridoxal 5'-phosphate salvage; pyridoxal 5'-phosphate from pyridoxamine 5'-phosphate: step 1/1. It participates in cofactor metabolism; pyridoxal 5'-phosphate salvage; pyridoxal 5'-phosphate from pyridoxine 5'-phosphate: step 1/1. Its function is as follows. Catalyzes the oxidation of either pyridoxine 5'-phosphate (PNP) or pyridoxamine 5'-phosphate (PMP) into pyridoxal 5'-phosphate (PLP). Has an in vitro catalytic efficiency for PNP approximately 300-fold lower than that of PPOX1. The sequence is that of Pyridoxine/pyridoxamine 5'-phosphate oxidase 2 (PPOX2) from Arabidopsis thaliana (Mouse-ear cress).